The primary structure comprises 89 residues: Large ribosomal subunit protein eL34 (89 aa).

The interval 1–32 (MPAPRFKSGSFKKISKRGPGNKTLTHHRRSKV) is disordered.

It belongs to the eukaryotic ribosomal protein eL34 family.

The sequence is that of Large ribosomal subunit protein eL34 from Methanococcus aeolicus (strain ATCC BAA-1280 / DSM 17508 / OCM 812 / Nankai-3).